A 130-amino-acid chain; its full sequence is Small ribosomal subunit protein uS9 (130 aa).

The tract at residues 111–130 (VERKKVGLRKARRRPQFSKR) is disordered. Positions 116-130 (VGLRKARRRPQFSKR) are enriched in basic residues.

It belongs to the universal ribosomal protein uS9 family.

The polypeptide is Small ribosomal subunit protein uS9 (Enterobacter sp. (strain 638)).